Consider the following 377-residue polypeptide: Odorant receptor 30a (377 aa).

Topologically, residues M1–R34 are cytoplasmic. A helical membrane pass occupies residues Y35–S55. Over T56–N65 the chain is Extracellular. The helical transmembrane segment at V66–R86 threads the bilayer. Topologically, residues F87 to R127 are cytoplasmic. A helical membrane pass occupies residues I128–S148. The Extracellular segment spans residues E149 to E172. A helical membrane pass occupies residues I173–T193. Topologically, residues N194–H254 are cytoplasmic. The chain crosses the membrane as a helical span at residues L255 to A275. The Extracellular segment spans residues Q276–Q280. A helical membrane pass occupies residues T281–V301. Topologically, residues A302–A344 are cytoplasmic. Residues I345–I365 traverse the membrane as a helical segment. Topologically, residues Y366–G377 are extracellular.

The protein belongs to the insect chemoreceptor superfamily. Heteromeric odorant receptor channel (TC 1.A.69) family. Or30a subfamily. Interacts with Orco. Complexes exist early in the endomembrane system in olfactory sensory neurons (OSNs), coupling these complexes to the conserved ciliary trafficking pathway.

It localises to the cell membrane. Its function is as follows. Odorant receptor which mediates acceptance or avoidance behavior, depending on its substrates. The odorant receptor repertoire encodes a large collection of odor stimuli that vary widely in identity, intensity, and duration. May form a complex with Orco to form odorant-sensing units, providing sensitive and prolonged odorant signaling and calcium permeability. Involved in the behavioral responses to propyl acetate and anisole. The protein is Odorant receptor 30a (Or30a) of Drosophila melanogaster (Fruit fly).